The chain runs to 63 residues: Acrosin inhibitor 1 (63 aa).

Residues 8 to 63 (FGFPPDCKVYTEACTREYNPICDSAAKTYSNECTFCNEKMNNDADIHFNHFGECEY) enclose the Kazal-like domain. 3 cysteine pairs are disulfide-bonded: Cys14/Cys43, Cys21/Cys40, and Cys29/Cys61.

As to expression, seminal plasma.

It localises to the secreted. Functionally, strong inhibitor of acrosin. The chain is Acrosin inhibitor 1 from Bos taurus (Bovine).